Here is a 345-residue protein sequence, read N- to C-terminus: Uroporphyrinogen decarboxylase (345 aa).

Residues 23 to 27 (RQAGR), Asp-73, Tyr-149, Thr-203, and His-319 contribute to the substrate site.

Belongs to the uroporphyrinogen decarboxylase family. Homodimer.

It is found in the cytoplasm. The enzyme catalyses uroporphyrinogen III + 4 H(+) = coproporphyrinogen III + 4 CO2. Its pathway is porphyrin-containing compound metabolism; protoporphyrin-IX biosynthesis; coproporphyrinogen-III from 5-aminolevulinate: step 4/4. In terms of biological role, catalyzes the decarboxylation of four acetate groups of uroporphyrinogen-III to yield coproporphyrinogen-III. The polypeptide is Uroporphyrinogen decarboxylase (Vesicomyosocius okutanii subsp. Calyptogena okutanii (strain HA)).